We begin with the raw amino-acid sequence, 335 residues long: Protein BIG1 (335 aa).

The N-terminal stretch at 1–17 (MQTVLKYLLLIMCGSFC) is a signal peptide. At 20 to 275 (EELQNQTNVP…FDSQLIENNR (256 aa)) the chain is on the lumenal side. Asparagine 24 and asparagine 144 each carry an N-linked (GlcNAc...) asparagine glycan. Residues 276 to 296 (GLLQLIFTILVGYILIQFFFT) form a helical membrane-spanning segment. The Cytoplasmic portion of the chain corresponds to 297–335 (KKTIVDEKITNKKDNVKQTSPQLLKKVQEIQKKPSQQVS).

Belongs to the BIG1 family. In terms of processing, N-glycosylated.

Its subcellular location is the endoplasmic reticulum membrane. Functionally, required for normal beta-1,6-glucan synthesis. This chain is Protein BIG1 (BIG1), found in Saccharomyces cerevisiae (strain ATCC 204508 / S288c) (Baker's yeast).